The primary structure comprises 1267 residues: MSSMILTQFRPFIESISGITDQSNDVFEDAAKAFSMFTRSDVYKALDEIPFSDDAMLPIPPTIYTKPSHDSYYYIDALNRVRRKTYQGPDDVYVPNCSIVELLEPHETLTSYGRLSEAIENRAKDGDSQARIATTYGRIAESQARQIKAPLEKFVLALLVSEAGGSLYDPVLQKYDEIPDLSHNCPLWCFREICRHISGPLPDRAPYLYLSAGVFWLMSPRMTSAIPPLLSDLVNLAILQQTAGLDPSLVKLGVQICLHAAASSSYAWFILKTKSIFPQNTLHSMYESLEGGYCPNLEWLEPRSDYKFMYMGVMPLSTKYARSAPSNDKKARELGEKYGLSSVVSELRKRTKTYVKHDFASVRYIRDAMACTSGIFLVRTPTETVLQEYTQSPEIKVPIPQKDWTGPVGEIRILKDTTSSIARYLYRTWYLAAARMAAQPRTWDPLFQAIMRSQYVTARGGSGAALRESLYAINVSLPDFKGLPVKAATKIFQAAQLANLPFSHTSVAILADTSMGLRNQVQRRPRSIMPLNVPQQQVSAPHTLTADYINYHMNLSTTSGSAVIEKVIPLGVYASSPPNQSINIDISACDASITWDFFLSVIMAAIHEGVASGSIGKPFMGVPASIVNDESVVGVRAARPISGMQNMIQHLSKLYKRGFSYRVNDSFSPGNDFTHMTTTFPSGSTATSTEHTANNSTMMETFLTVWGPEHTDDPDVLRLMKSLTIQRNYVCQGDDGLMIIDGNTAGKVNSETIQKMLELISKYGEEFGWKYDIAYDGTAEYLKLYFIFGCRIPNLSRHPIVGKERANSSAEEPWPAILDQIMGIFFNGVHDGLQWQRWIRYSWALCCAFSRQRTMIGESVGYLQYPMWSFVYWGLPLVKVFGSDPWIFSWYMPTGDLGMYSWISLIRPLMTRWMVANGYATDRCSPVFGNADYRRCFNEIKLYQGYYMAQLPRNPTKSGRAAPREVREQFTQALSDYLMQNPELKSRVLRGRSEWEKYGAGIIHNPPSLFDVPHKWYLGAQEAATATREELAEMDETLMRARRHSYSSFSKLLEAYLLVKWRMCEAREPSVDLRLPLCAGIDPLNSDPFLKMVSVGPMLQSTRKYFAQTLFMAKTVSGLDVNAIDSALLRLRTLGADKKALTAQLLMVGLQESEADALAGKIMLQDVSTVQLARVVNLAVPDTWMSLDFDSMFKHHVKLLPKDGRHLNTDIPPRMGWLRAILRFLGAGMVMTATGVAVDIYLEDIHGGGRALGQRFMTWMRQEGRSA.

The RdRp catalytic domain maps to 555–792 (LSTTSGSAVI…KLYFIFGCRI (238 aa)).

This sequence belongs to the reoviridae RNA-directed RNA polymerase family.

It is found in the virion. The enzyme catalyses RNA(n) + a ribonucleoside 5'-triphosphate = RNA(n+1) + diphosphate. RNA-directed RNA polymerase that is involved in transcription and genome replication. Following infection, it catalyzes the synthesis of fully conservative plus strands. After core assembly, which consists in recruitment of one capped plus-strand for each genomic segments and polymerase complexes, the polymerase switches mode and catalyzes the synthesis of complementary minus-strands. In Mammalia (T1L), this protein is RNA-directed RNA polymerase lambda-3 (L1).